The following is a 370-amino-acid chain: 4-hydroxy-3-methylbut-2-en-1-yl diphosphate synthase (flavodoxin) (370 aa).

The [4Fe-4S] cluster site is built by C270, C273, C305, and E312.

The protein belongs to the IspG family. [4Fe-4S] cluster is required as a cofactor.

The enzyme catalyses (2E)-4-hydroxy-3-methylbut-2-enyl diphosphate + oxidized [flavodoxin] + H2O + 2 H(+) = 2-C-methyl-D-erythritol 2,4-cyclic diphosphate + reduced [flavodoxin]. Its pathway is isoprenoid biosynthesis; isopentenyl diphosphate biosynthesis via DXP pathway; isopentenyl diphosphate from 1-deoxy-D-xylulose 5-phosphate: step 5/6. Converts 2C-methyl-D-erythritol 2,4-cyclodiphosphate (ME-2,4cPP) into 1-hydroxy-2-methyl-2-(E)-butenyl 4-diphosphate. The chain is 4-hydroxy-3-methylbut-2-en-1-yl diphosphate synthase (flavodoxin) from Hamiltonella defensa subsp. Acyrthosiphon pisum (strain 5AT).